The sequence spans 29 residues: Cytochrome b6-f complex subunit 8 (29 aa).

A helical transmembrane segment spans residues 3-23 (IISLAWAALMVVFTFSLSLVV).

Belongs to the PetN family. As to quaternary structure, the 4 large subunits of the cytochrome b6-f complex are cytochrome b6, subunit IV (17 kDa polypeptide, PetD), cytochrome f and the Rieske protein, while the 4 small subunits are PetG, PetL, PetM and PetN. The complex functions as a dimer.

It localises to the plastid. Its subcellular location is the chloroplast thylakoid membrane. Component of the cytochrome b6-f complex, which mediates electron transfer between photosystem II (PSII) and photosystem I (PSI), cyclic electron flow around PSI, and state transitions. The chain is Cytochrome b6-f complex subunit 8 from Nicotiana tomentosiformis (Tobacco).